Here is a 382-residue protein sequence, read N- to C-terminus: Neuropeptide Y receptor type 1 (382 aa).

At 1-33 (MNSTLFSRVENYSVHYNVSENSPFLAFENDDCH) the chain is on the extracellular side. N-linked (GlcNAc...) asparagine glycosylation is found at N2, N11, and N17. The helical transmembrane segment at 34-54 (LPLAVIFTLALAYGAVIILGV) threads the bilayer. The Cytoplasmic portion of the chain corresponds to 55–75 (SGNLALIIIILKQKEMRNVTN). A helical membrane pass occupies residues 76–96 (ILIVNLSFSDLLVAVMCLPFT). Residues 97-115 (FVYTLMDHWVFGETMCKLN) are Extracellular-facing. C112 and C197 are disulfide-bonded. The chain crosses the membrane as a helical span at residues 116–136 (PFVQCVSITVSIFSLVLIAVE). Residues 137 to 153 (RHQLIINPRGWRPNNRH) are Cytoplasmic-facing. The helical transmembrane segment at 154–174 (AYIGITVIWVLAVASSLPFVI) threads the bilayer. The Extracellular portion of the chain corresponds to 175–210 (YQILTDEPFQNVSLAAFKDKYVCFDKFPSDSHRLSY). Residues 211-231 (TTLLLVLQYFGPLCFIFICYF) traverse the membrane as a helical segment. Over 232–259 (KIYIRLKRRNNMMDKIRDSKYRSSETKR) the chain is Cytoplasmic. Residues 260-280 (INVMLLSIVVAFAVCWLPLTI) form a helical membrane-spanning segment. Residues 281–298 (FNTVFDWNHQIIATCNHN) are Extracellular-facing. A helical membrane pass occupies residues 299–319 (LLFLLCHLTAMISTCVNPIFY). Residues 320–382 (GFLNKNFQRD…KISMNDNEKI (63 aa)) lie on the Cytoplasmic side of the membrane. Residue C337 is the site of S-palmitoyl cysteine attachment. Phosphoserine is present on residues S367 and S375.

The protein belongs to the G-protein coupled receptor 1 family. In terms of tissue distribution, brain.

Its subcellular location is the cell membrane. Functionally, receptor for neuropeptide Y and peptide YY. This Rattus norvegicus (Rat) protein is Neuropeptide Y receptor type 1 (Npy1r).